The sequence spans 209 residues: Ribonuclease HII (209 aa).

Positions Gln20–Ile209 constitute an RNase H type-2 domain. A divalent metal cation is bound by residues Asp26, Glu27, and Asp122.

The protein belongs to the RNase HII family. Requires Mn(2+) as cofactor. It depends on Mg(2+) as a cofactor.

The protein resides in the cytoplasm. It catalyses the reaction Endonucleolytic cleavage to 5'-phosphomonoester.. Its function is as follows. Endonuclease that specifically degrades the RNA of RNA-DNA hybrids. The protein is Ribonuclease HII of Prochlorococcus marinus (strain MIT 9515).